Consider the following 347-residue polypeptide: MASSLTRNCSRFSKAISVRFMSNLPENTVYGGPKPQNPNQRVTLTHLRQKHRRGEPITVVTAYDYPSAVHLDTAGIDVCLVGDSASMVVHGHDTTLPISLDEMLVHCRAVARGAKRPLLVGDLPFGTYESSSSQAVDTAVRVLKEGGMDAIKLEGGSASRITAAKAIVEAGIAVIGHVGLTPQAISVLGGFRPQGRNIASAVKVVETAMALQEAGCFSVVLECVPPPVAAAATSALKIPTIGIGAGPFCSGQVLVYHDLLGMMQHPHHAKVTPKFCKQYANVGEVINKALMEYKEEVSKKVFPGPSHSPYKITASELDGFLTELQKLGFDKAASAAALAAENMEPSK.

Residues 1–48 (MASSLTRNCSRFSKAISVRFMSNLPENTVYGGPKPQNPNQRVTLTHLR) constitute a mitochondrion transit peptide. D83 and D122 together coordinate Mg(2+). 3-methyl-2-oxobutanoate contacts are provided by residues 83-84 (DS), D122, and K152. Residue E154 participates in Mg(2+) binding. E222 serves as the catalytic Proton acceptor.

The protein belongs to the PanB family. Requires Mg(2+) as cofactor.

The protein localises to the mitochondrion. The enzyme catalyses 3-methyl-2-oxobutanoate + (6R)-5,10-methylene-5,6,7,8-tetrahydrofolate + H2O = 2-dehydropantoate + (6S)-5,6,7,8-tetrahydrofolate. Its pathway is cofactor biosynthesis; (R)-pantothenate biosynthesis; (R)-pantoate from 3-methyl-2-oxobutanoate: step 1/2. Functionally, catalyzes the reversible reaction in which hydroxymethyl group from 5,10-methylenetetrahydrofolate is transferred onto alpha-ketoisovalerate to form ketopantoate. In Arabidopsis thaliana (Mouse-ear cress), this protein is 3-methyl-2-oxobutanoate hydroxymethyltransferase 1, mitochondrial (KPHMT1).